The chain runs to 115 residues: Con-Ins T1B (115 aa).

Residues 1-24 form the signal peptide; it reads MTTSFYFLLMALGLLLYVCQSSFG. A propeptide spanning residues 25-29 is cleaved from the precursor; sequence NQHTR. Proline 34 is subject to 4-hydroxyproline; partial. 3 disulfide bridges follow: cysteine 38-cysteine 101, cysteine 50-cysteine 114, and cysteine 100-cysteine 105. Positions 52-94 are cleaved as a propeptide — c peptide; the sequence is RKRNDAGKKRGQASPLWQRGGSLSMLKARAKRNEAFHLQRAHR. Position 98 is a 4-carboxyglutamate (glutamate 98). Proline 104 is subject to 4-hydroxyproline; partial. Glutamate 109 carries the 4-carboxyglutamate; partial modification. Cysteine 114 is modified (cysteine amide).

It belongs to the insulin family. As to quaternary structure, heterodimer of A and B chains; disulfide-linked. In terms of tissue distribution, expressed by the venom gland.

It is found in the secreted. This venom insulin, from a fish-hunting cone snail, facilitates prey capture by rapidly inducing hypoglycemic shock. It is one of the smallest known insulin found in nature and lacks the C-terminal segment of the B chain that, in human insulin, mediates engagement of the insulin receptor (INSR) and assembly of the hormone's hexameric storage form. Despite lacking this segment, it both binds and activates human insulin receptor (long isoform (HIR-B) of INSR) with a high potency (EC(50)=12.0 nM). In vivo, intraperitoneal injection of this peptide into zebrafish lowers blood glucose with a lower potency than human insulin. In addition, when applied to water, this peptide reduces overall locomotor activity of zebrafish larvae, observed as a significant decrease in the percentage of time spent swimming and movement frequency. When tested on a mouse model of diabetes, this insulin also lowers blood glucose with a 10-fold lower potency than human insulin. The chain is Con-Ins T1B from Conus tulipa (Fish-hunting cone snail).